Reading from the N-terminus, the 140-residue chain is Large-conductance mechanosensitive channel (140 aa).

2 helical membrane passes run 16-36 (VIDL…VTAL) and 84-104 (INTV…VKLI).

It belongs to the MscL family. As to quaternary structure, homopentamer.

It is found in the cell inner membrane. Its function is as follows. Channel that opens in response to stretch forces in the membrane lipid bilayer. May participate in the regulation of osmotic pressure changes within the cell. This Xanthomonas oryzae pv. oryzae (strain PXO99A) protein is Large-conductance mechanosensitive channel.